We begin with the raw amino-acid sequence, 221 residues long: Germin-like protein subfamily 1 member 17 (221 aa).

Residues Met1–Ala21 form the signal peptide. A disulfide bridge links Cys31 with Cys48. Residues Ser76–Lys213 form the Cupin type-1 domain. A glycan (N-linked (GlcNAc...) asparagine) is linked at Asn77. 4 residues coordinate Mn(2+): His110, His112, Glu117, and His159.

It belongs to the germin family. Oligomer (believed to be a pentamer but probably hexamer).

The protein resides in the secreted. It localises to the extracellular space. It is found in the apoplast. Its function is as follows. May play a role in plant defense. Probably has no oxalate oxidase activity even if the active site is conserved. This chain is Germin-like protein subfamily 1 member 17, found in Arabidopsis thaliana (Mouse-ear cress).